Consider the following 192-residue polypeptide: Shikimate kinase (192 aa).

Position 32–37 (32–37 (GAGKSA)) interacts with ATP. Ser36 is a Mg(2+) binding site. Positions 54, 78, and 100 each coordinate substrate. Residue Arg138 participates in ATP binding. Arg157 is a substrate binding site.

The protein belongs to the shikimate kinase family. As to quaternary structure, monomer. Mg(2+) is required as a cofactor.

It localises to the cytoplasm. The enzyme catalyses shikimate + ATP = 3-phosphoshikimate + ADP + H(+). Its pathway is metabolic intermediate biosynthesis; chorismate biosynthesis; chorismate from D-erythrose 4-phosphate and phosphoenolpyruvate: step 5/7. Its function is as follows. Catalyzes the specific phosphorylation of the 3-hydroxyl group of shikimic acid using ATP as a cosubstrate. The polypeptide is Shikimate kinase (Rhizobium meliloti (strain 1021) (Ensifer meliloti)).